The following is a 229-amino-acid chain: UPF0758 protein CLH_0547 (229 aa).

The MPN domain maps to 107 to 229; sequence KIMSPNDIAM…FISLKEKGFI (123 aa). Positions 178, 180, and 191 each coordinate Zn(2+). A JAMM motif motif is present at residues 178-191; sequence HNHPSGDPTPSKED.

The protein belongs to the UPF0758 family.

The chain is UPF0758 protein CLH_0547 from Clostridium botulinum (strain Alaska E43 / Type E3).